Reading from the N-terminus, the 452-residue chain is Nuclear distribution protein PAC1 (452 aa).

The 33-residue stretch at 12–44 (QKDELHKAILAYFSASGLSNTGAALREELGVGD) folds into the LisH domain. A coiled-coil region spans residues 64–91 (TGVLRLQKKIMELESRLSSLQSELDSAT). 8 WD repeats span residues 117 to 158 (SHRN…RTVK), 160 to 200 (HTKA…KNIR), 204 to 245 (GHDH…CVKT), 248 to 287 (GHSD…HKAT), 290 to 350 (GHEH…LKTL), 352 to 391 (GHDN…RCVK), 396 to 435 (AHSH…INVR), and 437 to 452 (VIAT…VFAS).

Belongs to the WD repeat LIS1/nudF family. As to quaternary structure, self-associates. Interacts with NDL1 and dynein.

Its subcellular location is the cytoplasm. It localises to the cytoskeleton. The protein resides in the spindle pole. Positively regulates the activity of the minus-end directed microtubule motor protein dynein. May enhance dynein-mediated microtubule sliding by targeting dynein to the microtubule plus end. Required for nuclear migration during vegetative growth as well as development. Required for retrograde early endosome (EE) transport from the hyphal tip. Required for localization of dynein to the mitotic spindle poles. Recruits additional proteins to the dynein complex at SPBs. This Tuber melanosporum (strain Mel28) (Perigord black truffle) protein is Nuclear distribution protein PAC1.